The primary structure comprises 165 residues: Large ribosomal subunit protein uL5 (165 aa).

This sequence belongs to the universal ribosomal protein uL5 family. As to quaternary structure, part of the 50S ribosomal subunit; contacts the 5S rRNA and probably tRNA. Forms a bridge to the 30S subunit in the 70S ribosome.

In terms of biological role, this is one of the proteins that bind and probably mediate the attachment of the 5S RNA into the large ribosomal subunit, where it forms part of the central protuberance. In the 70S ribosome it contacts protein S13 of the 30S subunit (bridge B1b), connecting the 2 subunits; this bridge is implicated in subunit movement. May contact the P site tRNA; the 5S rRNA and some of its associated proteins might help stabilize positioning of ribosome-bound tRNAs. In Methanosarcina acetivorans (strain ATCC 35395 / DSM 2834 / JCM 12185 / C2A), this protein is Large ribosomal subunit protein uL5.